The primary structure comprises 185 residues: Histone H1-delta (185 aa).

Disordered regions lie at residues 1-37 and 90-185; these read MADTDAAPAAPAPSTPKKAAKKKASKPKTPASHPKYS and RHVK…GKKK. Residues 32–105 form the H15 domain; sequence SHPKYSDMIA…GASGSFLLAE (74 aa). A compositionally biased stretch (basic residues) spans 109 to 185; sequence TPKKAAAKKA…KAAKGKGKKK (77 aa).

It belongs to the histone H1/H5 family.

Its subcellular location is the nucleus. It localises to the chromosome. Functionally, histones H1 are necessary for the condensation of nucleosome chains into higher-order structures. The protein is Histone H1-delta of Strongylocentrotus purpuratus (Purple sea urchin).